We begin with the raw amino-acid sequence, 345 residues long: tRNA pseudouridine synthase B (345 aa).

The disordered stretch occupies residues 1 to 33 (MGGNSQPHQEPRRVNNDPRAKQQKGNQVRRDRR). The segment covering 9 to 20 (QEPRRVNNDPRA) has biased composition (basic and acidic residues). Residue Asp72 is the Nucleophile of the active site.

It belongs to the pseudouridine synthase TruB family. Type 1 subfamily.

The enzyme catalyses uridine(55) in tRNA = pseudouridine(55) in tRNA. Functionally, responsible for synthesis of pseudouridine from uracil-55 in the psi GC loop of transfer RNAs. This chain is tRNA pseudouridine synthase B, found in Bradyrhizobium diazoefficiens (strain JCM 10833 / BCRC 13528 / IAM 13628 / NBRC 14792 / USDA 110).